Consider the following 270-residue polypeptide: MSLKKSPFFELRSGSVDTLLFIVKTADLDALRAELVKRFEATPEFFADDVVAIDVRRLAGHERVPLDDIRGMLNDVRMRAIGVVAQPEQHAWAASAGLPLLEARDRRAPSSKAADEAPVQQAEPAAPAAGQAALFEQAGPTLADAGAPPESPAPAVAAQSATLVVDRPLRSGQQIYAKGDLVVLGPVSYGAEVIAEGNIHIYAPLRGRALAGVHGNHDARIFCTCLEPELISIAGIYRTTENPLPADVLGKSVQIRLEQEKLMIEPLRLT.

Residues 105-129 (DRRAPSSKAADEAPVQQAEPAAPAA) form a disordered region. A compositionally biased stretch (low complexity) spans 116-129 (EAPVQQAEPAAPAA).

It belongs to the MinC family. Interacts with MinD and FtsZ.

Cell division inhibitor that blocks the formation of polar Z ring septums. Rapidly oscillates between the poles of the cell to destabilize FtsZ filaments that have formed before they mature into polar Z rings. Prevents FtsZ polymerization. The polypeptide is Probable septum site-determining protein MinC (Burkholderia pseudomallei (strain 668)).